A 1414-amino-acid polypeptide reads, in one-letter code: DNA-directed RNA polymerase subunit beta' (1414 aa).

Residues cysteine 72, cysteine 74, cysteine 87, and cysteine 90 each coordinate Zn(2+). 3 residues coordinate Mg(2+): aspartate 463, aspartate 465, and aspartate 467. Residues cysteine 811, cysteine 885, cysteine 892, and cysteine 895 each contribute to the Zn(2+) site.

It belongs to the RNA polymerase beta' chain family. The RNAP catalytic core consists of 2 alpha, 1 beta, 1 beta' and 1 omega subunit. When a sigma factor is associated with the core the holoenzyme is formed, which can initiate transcription. Mg(2+) serves as cofactor. It depends on Zn(2+) as a cofactor.

The catalysed reaction is RNA(n) + a ribonucleoside 5'-triphosphate = RNA(n+1) + diphosphate. Its function is as follows. DNA-dependent RNA polymerase catalyzes the transcription of DNA into RNA using the four ribonucleoside triphosphates as substrates. This is DNA-directed RNA polymerase subunit beta' from Roseobacter denitrificans (strain ATCC 33942 / OCh 114) (Erythrobacter sp. (strain OCh 114)).